We begin with the raw amino-acid sequence, 641 residues long: Chaperone protein HtpG (641 aa).

Residues 1 to 348 are a; substrate-binding; the sequence is MTTATEKQTL…SNDLSLNVSR (348 aa). A b region spans residues 349–565; sequence EILQNDKAVE…AYDMGVQMRR (217 aa). Positions 566–641 are c; it reads IMEAAGQALP…KLLLELSNAG (76 aa).

It belongs to the heat shock protein 90 family. Homodimer.

Its subcellular location is the cytoplasm. Molecular chaperone. Has ATPase activity. In Hahella chejuensis (strain KCTC 2396), this protein is Chaperone protein HtpG.